The sequence spans 175 residues: Transcription factor HES-3 (175 aa).

One can recognise a bHLH domain in the interval 1–49; sequence MEKKRRARINLSLEQLRSLLERHYSHQIRKRKLEKADILELSVKYVRSL. The Orange domain occupies 65–98; sequence YPSGFRGGLPGSSQRLRPGEDDSGLRCPLLLQRR. Positions 124-145 are enriched in low complexity; it reads PGPPAGGSQSPQSPFPPLGGLL. The disordered stretch occupies residues 124-175; that stretch reads PGPPAGGSQSPQSPFPPLGGLLESSTGILAPPPASNCQAENPRPGFRVWRPW. The WRPW motif motif lies at 172–175; that stretch reads WRPW.

In terms of assembly, transcription repression requires formation of a complex with a corepressor protein of the Groucho/TLE family. In terms of tissue distribution, expressed exclusively in Purkinje cells.

Its subcellular location is the nucleus. Its function is as follows. Transcriptional repressor of genes that require a bHLH protein for their transcription. This is Transcription factor HES-3 (Hes3) from Rattus norvegicus (Rat).